Here is a 379-residue protein sequence, read N- to C-terminus: Succinyl-diaminopimelate desuccinylase (379 aa).

His-70 contacts Zn(2+). Asp-72 is a catalytic residue. Asp-103 contacts Zn(2+). The active-site Proton acceptor is the Glu-137. 3 residues coordinate Zn(2+): Glu-138, Glu-166, and His-352.

Belongs to the peptidase M20A family. DapE subfamily. As to quaternary structure, homodimer. Zn(2+) serves as cofactor. The cofactor is Co(2+).

It catalyses the reaction N-succinyl-(2S,6S)-2,6-diaminopimelate + H2O = (2S,6S)-2,6-diaminopimelate + succinate. The protein operates within amino-acid biosynthesis; L-lysine biosynthesis via DAP pathway; LL-2,6-diaminopimelate from (S)-tetrahydrodipicolinate (succinylase route): step 3/3. In terms of biological role, catalyzes the hydrolysis of N-succinyl-L,L-diaminopimelic acid (SDAP), forming succinate and LL-2,6-diaminopimelate (DAP), an intermediate involved in the bacterial biosynthesis of lysine and meso-diaminopimelic acid, an essential component of bacterial cell walls. The polypeptide is Succinyl-diaminopimelate desuccinylase (Shewanella putrefaciens (strain CN-32 / ATCC BAA-453)).